Consider the following 190-residue polypeptide: MAAIKPITTYKGKIVPLFNDNIDTDQIIPKVHLKRISKSGFGPFAFDEWRYLPDGSDNPDFNPNKPQYKGASILITGDNFGCGSSREHAAWALKDYGFHIIIAGSFSDIFYMNCTKNAMLPIVLEKSAREHLAQYVEIEVDLPNQTVSSPDKRFHFEIDETWKNKLVNGLDDIAITLQYESLIEKYEKSL.

This sequence belongs to the LeuD family. LeuD type 1 subfamily. Heterodimer of LeuC and LeuD.

It carries out the reaction (2R,3S)-3-isopropylmalate = (2S)-2-isopropylmalate. It participates in amino-acid biosynthesis; L-leucine biosynthesis; L-leucine from 3-methyl-2-oxobutanoate: step 2/4. Functionally, catalyzes the isomerization between 2-isopropylmalate and 3-isopropylmalate, via the formation of 2-isopropylmaleate. In Staphylococcus aureus (strain USA300), this protein is 3-isopropylmalate dehydratase small subunit.